We begin with the raw amino-acid sequence, 204 residues long: Guanylate kinase (204 aa).

The 179-residue stretch at 3–181 (GTLIIITAPS…ALDDLVAVVR (179 aa)) folds into the Guanylate kinase-like domain. 10 to 17 (APSGAGKT) serves as a coordination point for ATP.

The protein belongs to the guanylate kinase family.

It is found in the cytoplasm. It carries out the reaction GMP + ATP = GDP + ADP. Its function is as follows. Essential for recycling GMP and indirectly, cGMP. In Aromatoleum aromaticum (strain DSM 19018 / LMG 30748 / EbN1) (Azoarcus sp. (strain EbN1)), this protein is Guanylate kinase.